Here is a 37-residue protein sequence, read N- to C-terminus: ALTCSDVSNKISPCLSYLKQGGEVPADCCAGVKGLND.

The protein belongs to the plant LTP family.

In terms of biological role, plant non-specific lipid-transfer proteins transfer phospholipids as well as galactolipids across membranes. May play a role in wax or cutin deposition in the cell walls of expanding epidermal cells and certain secretory tissues. The polypeptide is Non-specific lipid-transfer protein (Artemisia vulgaris (Mugwort)).